The sequence spans 465 residues: UDP-N-acetylmuramoylalanine--D-glutamate ligase (465 aa).

Glycine 127–threonine 133 contacts ATP.

This sequence belongs to the MurCDEF family.

It localises to the cytoplasm. The enzyme catalyses UDP-N-acetyl-alpha-D-muramoyl-L-alanine + D-glutamate + ATP = UDP-N-acetyl-alpha-D-muramoyl-L-alanyl-D-glutamate + ADP + phosphate + H(+). The protein operates within cell wall biogenesis; peptidoglycan biosynthesis. Functionally, cell wall formation. Catalyzes the addition of glutamate to the nucleotide precursor UDP-N-acetylmuramoyl-L-alanine (UMA). In Cereibacter sphaeroides (strain KD131 / KCTC 12085) (Rhodobacter sphaeroides), this protein is UDP-N-acetylmuramoylalanine--D-glutamate ligase.